The sequence spans 463 residues: tRNA dimethylallyltransferase 9 (463 aa).

Position 57–64 (Gly-57–Ser-64) interacts with ATP. Residue Thr-59 to Ser-64 participates in substrate binding. The segment at Asp-82–Gln-85 is interaction with substrate tRNA.

It belongs to the IPP transferase family. Mg(2+) is required as a cofactor. As to expression, expressed ubiquitously, with highest expression in proliferating tissues.

It localises to the cytoplasm. The catalysed reaction is adenosine(37) in tRNA + dimethylallyl diphosphate = N(6)-dimethylallyladenosine(37) in tRNA + diphosphate. Catalyzes the transfer of a dimethylallyl group onto the adenine at position 37 in tRNAs that read codons beginning with uridine, leading to the formation of N6-(dimethylallyl)adenosine (i(6)A). Involved in the cis-type cytokinin biosynthesis. The sequence is that of tRNA dimethylallyltransferase 9 (IPT9) from Arabidopsis thaliana (Mouse-ear cress).